The primary structure comprises 350 residues: Ribosomal RNA large subunit methyltransferase Cfr (350 aa).

Residue E92 is the Proton acceptor of the active site. Positions E99–E333 constitute a Radical SAM core domain. C106 and C338 are oxidised to a cystine. Residues C113, C117, and C120 each contribute to the [4Fe-4S] cluster site. Residues G159–E160, S190, S213–H215, and N293 each bind S-adenosyl-L-methionine. Catalysis depends on C338, which acts as the S-methylcysteine intermediate.

The protein belongs to the radical SAM superfamily. RlmN family. Cfr subfamily. [4Fe-4S] cluster serves as cofactor.

It localises to the cytoplasm. The catalysed reaction is adenosine(2503) in 23S rRNA + 2 reduced [2Fe-2S]-[ferredoxin] + 2 S-adenosyl-L-methionine = 8-methyladenosine(2503) in 23S rRNA + 5'-deoxyadenosine + L-methionine + 2 oxidized [2Fe-2S]-[ferredoxin] + S-adenosyl-L-homocysteine. Functionally, specifically methylates position 8 of adenine 2503 in 23S rRNA. Confers resistance to some classes of antibiotics. The sequence is that of Ribosomal RNA large subunit methyltransferase Cfr from Shouchella clausii (strain KSM-K16) (Alkalihalobacillus clausii).